The primary structure comprises 441 residues: Dihydroorotase (441 aa).

The Zn(2+) site is built by histidine 77 and histidine 79. Substrate is bound by residues 79–81 (HFR) and asparagine 111. Zn(2+)-binding residues include aspartate 167, histidine 194, and histidine 248. Position 294 (asparagine 294) interacts with substrate. Zn(2+) is bound at residue aspartate 321. Aspartate 321 is an active-site residue. Residues histidine 325 and 339–340 (FG) contribute to the substrate site.

This sequence belongs to the metallo-dependent hydrolases superfamily. DHOase family. Class I DHOase subfamily. It depends on Zn(2+) as a cofactor.

The enzyme catalyses (S)-dihydroorotate + H2O = N-carbamoyl-L-aspartate + H(+). Its pathway is pyrimidine metabolism; UMP biosynthesis via de novo pathway; (S)-dihydroorotate from bicarbonate: step 3/3. Catalyzes the reversible cyclization of carbamoyl aspartate to dihydroorotate. This Wolbachia sp. subsp. Drosophila simulans (strain wRi) protein is Dihydroorotase.